A 133-amino-acid chain; its full sequence is Interleukin-4 (133 aa).

The signal sequence occupies residues 1 to 24; the sequence is MGLTSQLIPTLVCLLACTSNFVHG. Disulfide bonds link Cys27–Cys133, Cys48–Cys85, and Cys70–Cys105. An N-linked (GlcNAc...) asparagine glycan is attached at Asn62.

The protein belongs to the IL-4/IL-13 family.

It localises to the secreted. Functionally, participates in at least several B-cell activation processes as well as of other cell types. It is a costimulator of DNA-synthesis. It induces the expression of class II MHC molecules on resting B-cells. It enhances both secretion and cell surface expression of IgE and IgG1. It also regulates the expression of the low affinity Fc receptor for IgE (CD23) on both lymphocytes and monocytes. Positively regulates IL31RA expression in macrophages. Stimulates autophagy in dendritic cells by interfering with mTORC1 signaling and through the induction of RUFY4. The sequence is that of Interleukin-4 (IL4) from Sus scrofa (Pig).